We begin with the raw amino-acid sequence, 129 residues long: Small ribosomal subunit protein uS11 (129 aa).

The protein belongs to the universal ribosomal protein uS11 family. As to quaternary structure, part of the 30S ribosomal subunit. Interacts with proteins S7 and S18. Binds to IF-3.

Its function is as follows. Located on the platform of the 30S subunit, it bridges several disparate RNA helices of the 16S rRNA. Forms part of the Shine-Dalgarno cleft in the 70S ribosome. The sequence is that of Small ribosomal subunit protein uS11 from Staphylococcus epidermidis (strain ATCC 12228 / FDA PCI 1200).